The sequence spans 119 residues: U9-hexatoxin-Hi1 (119 aa).

The N-terminal stretch at 1–17 (MKLYLVILVTSVALAAA) is a signal peptide. Residues 18 to 53 (SPTRTKEEPIEDELLEALLSVEKSLFNEETTVMEKR) constitute a propeptide that is removed on maturation. 4 disulfides stabilise this stretch: Cys55/Cys73, Cys66/Cys79, Cys70/Cys117, and Cys72/Cys88.

It belongs to the neurotoxin 03 (Tx2) family. 03 subfamily. In terms of tissue distribution, expressed by the venom gland.

It is found in the secreted. Its function is as follows. Probable ion channel inhibitor. In Hadronyche infensa (Fraser island funnel-web spider), this protein is U9-hexatoxin-Hi1.